Reading from the N-terminus, the 468-residue chain is Probable cytosol aminopeptidase (468 aa).

Residues K242 and D247 each coordinate Mn(2+). The active site involves K254. Positions 265, 324, and 326 each coordinate Mn(2+). Residue R328 is part of the active site.

This sequence belongs to the peptidase M17 family. It depends on Mn(2+) as a cofactor.

It is found in the cytoplasm. It catalyses the reaction Release of an N-terminal amino acid, Xaa-|-Yaa-, in which Xaa is preferably Leu, but may be other amino acids including Pro although not Arg or Lys, and Yaa may be Pro. Amino acid amides and methyl esters are also readily hydrolyzed, but rates on arylamides are exceedingly low.. The catalysed reaction is Release of an N-terminal amino acid, preferentially leucine, but not glutamic or aspartic acids.. Presumably involved in the processing and regular turnover of intracellular proteins. Catalyzes the removal of unsubstituted N-terminal amino acids from various peptides. This chain is Probable cytosol aminopeptidase, found in Neisseria meningitidis serogroup A / serotype 4A (strain DSM 15465 / Z2491).